A 119-amino-acid polypeptide reads, in one-letter code: uncharacterized protein (119 aa).

The interval 78–119 (SHRKSQQHQTQGNQVLRGTRKLESPTVGPRPGLRRQHTRNFL) is disordered. The segment covering 84-93 (QHQTQGNQVL) has biased composition (polar residues). Residues 109–119 (GLRRQHTRNFL) are compositionally biased toward basic residues.

This is an uncharacterized protein from Saccharomyces cerevisiae (strain ATCC 204508 / S288c) (Baker's yeast).